The primary structure comprises 552 residues: Hydroxylamine reductase (552 aa).

The [2Fe-2S] cluster site is built by Cys3, Cys6, Cys18, and Cys25. The hybrid [4Fe-2O-2S] cluster site is built by His250, Glu274, Cys318, Cys406, Cys434, Cys459, Glu493, and Lys495. Cys406 carries the cysteine persulfide modification.

Belongs to the HCP family. The cofactor is [2Fe-2S] cluster. Hybrid [4Fe-2O-2S] cluster is required as a cofactor.

Its subcellular location is the cytoplasm. The catalysed reaction is A + NH4(+) + H2O = hydroxylamine + AH2 + H(+). In terms of biological role, catalyzes the reduction of hydroxylamine to form NH(3) and H(2)O. The chain is Hydroxylamine reductase from Shewanella sediminis (strain HAW-EB3).